The chain runs to 344 residues: Heat-inducible transcription repressor HrcA (344 aa).

This sequence belongs to the HrcA family.

Functionally, negative regulator of class I heat shock genes (grpE-dnaK-dnaJ and groELS operons). Prevents heat-shock induction of these operons. In Streptococcus equi subsp. zooepidemicus (strain MGCS10565), this protein is Heat-inducible transcription repressor HrcA.